A 314-amino-acid chain; its full sequence is Acetaldehyde dehydrogenase 1/2 (314 aa).

Residue 12–15 (SGNI) coordinates NAD(+). Cys-130 serves as the catalytic Acyl-thioester intermediate. NAD(+) contacts are provided by residues 161–169 (SAGPGTRAN) and Asn-288.

This sequence belongs to the acetaldehyde dehydrogenase family.

The enzyme catalyses acetaldehyde + NAD(+) + CoA = acetyl-CoA + NADH + H(+). This is Acetaldehyde dehydrogenase 1/2 from Rhizorhabdus wittichii (strain DSM 6014 / CCUG 31198 / JCM 15750 / NBRC 105917 / EY 4224 / RW1) (Sphingomonas wittichii).